Consider the following 448-residue polypeptide: UPF0053 protein sll0260 (448 aa).

The 202-residue stretch at 2 to 203 (FSSSVELELF…AQAGMIDEAE (202 aa)) folds into the CNNM transmembrane domain. 4 consecutive transmembrane segments (helical) span residues 11 to 31 (FFIFVLVVLNGIFSGSEIAIV), 62 to 82 (FLSAVQIGITLIGILTGAVGG), 106 to 126 (LSISLLVGFITYLSLVVGELV), and 142 to 162 (VAPAMHLVAQLTAPLVYLLGV). CBS domains lie at 222–281 (MTPR…GQKI) and 286–345 (IVQP…NDDE).

This sequence belongs to the UPF0053 family.

The protein resides in the cell membrane. The chain is UPF0053 protein sll0260 from Synechocystis sp. (strain ATCC 27184 / PCC 6803 / Kazusa).